The following is a 64-amino-acid chain: Translation machinery-associated protein 7B (64 aa).

The segment at 1 to 38 is disordered; sequence MSSHEGGKKKALKQPKKQAKEMDEEEKAFKQKQKEEQK. Positions 27–38 are enriched in basic and acidic residues; it reads KAFKQKQKEEQK.

It belongs to the TMA7 family.

The polypeptide is Translation machinery-associated protein 7B (Homo sapiens (Human)).